Reading from the N-terminus, the 119-residue chain is DNA-binding protein inhibitor ID-3 (119 aa).

The bHLH domain maps to 28–80 (RGKGPAAEEPLSLLDDMNHCYSRLRELVPGVPRGTQLSQVEILQRVIDYILDL).

As to quaternary structure, homodimer, and heterodimer with other HLH proteins. Interacts with COPS5 and COPS7A. Interacts with IFI204. Interacts with GATA4 and NKX2-5. Interacts with ANKRD2; both proteins cooperate in myoblast differentiation. Interacts with CLOCK and BMAL1.

It is found in the nucleus. In terms of biological role, transcriptional regulator (lacking a basic DNA binding domain) which negatively regulates the basic helix-loop-helix (bHLH) transcription factors by forming heterodimers and inhibiting their DNA binding and transcriptional activity. Implicated in regulating a variety of cellular processes, including cellular growth, senescence, differentiation, apoptosis, angiogenesis, and neoplastic transformation. Involved in myogenesis by inhibiting skeletal muscle and cardiac myocyte differentiation and promoting muscle precursor cells proliferation. Inhibits the binding of E2A-containing protein complexes to muscle creatine kinase E-box enhancer. Regulates the circadian clock by repressing the transcriptional activator activity of the CLOCK-BMAL1 heterodimer. This chain is DNA-binding protein inhibitor ID-3 (ID3), found in Canis lupus familiaris (Dog).